Here is a 98-residue protein sequence, read N- to C-terminus: NADH-ubiquinone oxidoreductase chain 4L (98 aa).

3 helical membrane-spanning segments follow: residues 1–21 (MSLV…GLLM), 29–49 (ALLC…LTIL), and 61–81 (IILL…LVMV).

Belongs to the complex I subunit 4L family. Core subunit of respiratory chain NADH dehydrogenase (Complex I) which is composed of 45 different subunits.

The protein resides in the mitochondrion inner membrane. It catalyses the reaction a ubiquinone + NADH + 5 H(+)(in) = a ubiquinol + NAD(+) + 4 H(+)(out). Core subunit of the mitochondrial membrane respiratory chain NADH dehydrogenase (Complex I) which catalyzes electron transfer from NADH through the respiratory chain, using ubiquinone as an electron acceptor. Part of the enzyme membrane arm which is embedded in the lipid bilayer and involved in proton translocation. This Lagenorhynchus albirostris (White-beaked dolphin) protein is NADH-ubiquinone oxidoreductase chain 4L (MT-ND4L).